The primary structure comprises 1322 residues: Putative DNA ligase 4 (1322 aa).

11 residues coordinate ATP: Glu-265, Lys-267, Arg-272, Arg-287, Glu-317, Phe-387, Glu-497, Lys-502, Arg-513, Lys-519, and Lys-521. The active-site N6-AMP-lysine intermediate is the Lys-267. Glu-317 serves as a coordination point for Mg(2+). Glu-497 serves as a coordination point for Mg(2+). 2 BRCT domains span residues 686–768 (LDVQ…PKFD) and 825–935 (ERFC…TYSL). Disordered stretches follow at residues 945 to 1212 (IERS…SATC) and 1245 to 1310 (AEAK…KKVS). Basic and acidic residues predominate over residues 957–969 (DKLEENEKADTSH). 2 stretches are compositionally biased toward basic residues: residues 970–979 (VKHAPRKRGR) and 994–1005 (PVRRTRARRGNQ). 2 stretches are compositionally biased toward basic and acidic residues: residues 1007–1022 (AKIDDVEPEESDHGET) and 1033–1047 (NISKMEVDSFDKDQV). Residues 1051–1063 (PVRRTRARRGKQH) are compositionally biased toward basic residues. Composition is skewed to basic and acidic residues over residues 1082–1104 (DDQRLDADYISKMEEDSSDRDQG), 1125–1161 (AKIDRETGPGETGQDDKKLNADSISKMEEHAHDKDQE), and 1190–1204 (PKHERNQTVLRRDTA). A compositionally biased stretch (low complexity) spans 1261–1288 (SSYVAPVPQASASSASSSGVPAPHAGSS).

This sequence belongs to the ATP-dependent DNA ligase family. Requires Mg(2+) as cofactor.

The protein localises to the nucleus. It catalyses the reaction ATP + (deoxyribonucleotide)n-3'-hydroxyl + 5'-phospho-(deoxyribonucleotide)m = (deoxyribonucleotide)n+m + AMP + diphosphate.. Its function is as follows. DNA ligase involved in DNA non-homologous end joining (NHEJ); required for double-strand break (DSB) repair. This Oryza sativa subsp. japonica (Rice) protein is Putative DNA ligase 4 (LIG4).